The primary structure comprises 165 residues: Lipoprotein signal peptidase (165 aa).

The next 2 helical transmembrane spans lie at 64–84 and 88–108; these read LGRWLLVGVAVLAAAALGAWM and GSRLLVLSLGLIVGGAVGNAV. Active-site residues include D118 and D136. A helical transmembrane segment spans residues 128 to 148; the sequence is SWYVFNVADAGIVAGVAGLLV.

The protein belongs to the peptidase A8 family.

Its subcellular location is the cell inner membrane. The enzyme catalyses Release of signal peptides from bacterial membrane prolipoproteins. Hydrolyzes -Xaa-Yaa-Zaa-|-(S,diacylglyceryl)Cys-, in which Xaa is hydrophobic (preferably Leu), and Yaa (Ala or Ser) and Zaa (Gly or Ala) have small, neutral side chains.. It participates in protein modification; lipoprotein biosynthesis (signal peptide cleavage). Functionally, this protein specifically catalyzes the removal of signal peptides from prolipoproteins. The protein is Lipoprotein signal peptidase of Methylobacterium sp. (strain 4-46).